Here is a 241-residue protein sequence, read N- to C-terminus: Biosynthetic peptidoglycan transglycosylase (241 aa).

Residues 18 to 38 form a helical membrane-spanning segment; it reads GVIGIIALWMAGILIFAFLPV.

Belongs to the glycosyltransferase 51 family.

Its subcellular location is the cell inner membrane. The catalysed reaction is [GlcNAc-(1-&gt;4)-Mur2Ac(oyl-L-Ala-gamma-D-Glu-L-Lys-D-Ala-D-Ala)](n)-di-trans,octa-cis-undecaprenyl diphosphate + beta-D-GlcNAc-(1-&gt;4)-Mur2Ac(oyl-L-Ala-gamma-D-Glu-L-Lys-D-Ala-D-Ala)-di-trans,octa-cis-undecaprenyl diphosphate = [GlcNAc-(1-&gt;4)-Mur2Ac(oyl-L-Ala-gamma-D-Glu-L-Lys-D-Ala-D-Ala)](n+1)-di-trans,octa-cis-undecaprenyl diphosphate + di-trans,octa-cis-undecaprenyl diphosphate + H(+). It participates in cell wall biogenesis; peptidoglycan biosynthesis. In terms of biological role, peptidoglycan polymerase that catalyzes glycan chain elongation from lipid-linked precursors. This is Biosynthetic peptidoglycan transglycosylase from Yersinia pseudotuberculosis serotype O:3 (strain YPIII).